The sequence spans 440 residues: Frizzled/smoothened-like sans CRD protein D (440 aa).

An N-terminal signal peptide occupies residues 1-27 (MFIILKFLISFFLICNFFNYNDHFASG). Topologically, residues 28-85 (QTLPPGFCPSPLIYRNSTNRQNDIENGYLFIGQTNCTSPCPSLIFSENEWHRVYNMSL) are extracellular. N-linked (GlcNAc...) asparagine glycosylation is found at Asn43, Asn62, and Asn82. A helical transmembrane segment spans residues 86 to 106 (IAGTISMFALIFLIITYSPLV). Residues 107–110 (NKYN) are Cytoplasmic-facing. A helical transmembrane segment spans residues 111 to 131 (GYTRHTVGILFLFCGIFLTVT). Topologically, residues 132–162 (TDGRQLWDIDLGFEKYCPEPGRFARQSDTKC) are extracellular. The helical transmembrane segment at 163 to 183 (LVTAIFFQYGCVTSILWWAAI) threads the bilayer. Topologically, residues 184-200 (SVDLWMTIRKVKISKLQ) are cytoplasmic. The chain crosses the membrane as a helical span at residues 201-221 (FITYAVILNIITLILTFAPIA). Topologically, residues 222–244 (SKQYGYGEAAIGCWLMDLKYQVG) are extracellular. Residues 245–265 (YFWAPVGFCLCVGCVSIVLII) traverse the membrane as a helical segment. Topologically, residues 266–285 (REIYKVSDAIKKKLLAKHLK) are cytoplasmic. A helical transmembrane segment spans residues 286–306 (PLMLIILMLSEFIYMFIFYSY). Residues 307–346 (TTSRRGHYHDVVEKYIRCLFINASNPSICEVDVSISSPAH) lie on the Extracellular side of the membrane. N-linked (GlcNAc...) asparagine glycosylation occurs at Asn328. A helical membrane pass occupies residues 347–367 (FFFHFCMRLMGIEGLIFFGFT). Residues 368 to 440 (RQTKRIWLRS…IELSGVDSKN (73 aa)) are Cytoplasmic-facing. The disordered stretch occupies residues 395 to 428 (ISSDEKTSNSSHRTTRGCRETEFGESIEQSNDPE).

This sequence belongs to the G-protein coupled receptor Fz/Smo family.

The protein localises to the membrane. The sequence is that of Frizzled/smoothened-like sans CRD protein D (fscD) from Dictyostelium discoideum (Social amoeba).